The following is a 244-amino-acid chain: rRNA adenine N-6-methyltransferase (244 aa).

Residues Asn-11, Ile-13, Gly-38, Glu-59, Asp-84, and Asn-101 each contribute to the S-adenosyl-L-methionine site.

This sequence belongs to the class I-like SAM-binding methyltransferase superfamily. rRNA adenine N(6)-methyltransferase family.

The enzyme catalyses adenosine(2085) in 23S rRNA + 2 S-adenosyl-L-methionine = N(6)-dimethyladenosine(2085) in 23S rRNA + 2 S-adenosyl-L-homocysteine + 2 H(+). Functionally, this protein produces a dimethylation of the adenine residue at position 2085 in 23S rRNA, resulting in reduced affinity between ribosomes and macrolide-lincosamide-streptogramin B antibiotics. Is involved in erythromycin resistance. The polypeptide is rRNA adenine N-6-methyltransferase (ermGT) (Limosilactobacillus reuteri (Lactobacillus reuteri)).